The sequence spans 551 residues: Serine/threonine-protein kinase ppk21 (551 aa).

The interval Glu24–Thr43 is disordered. The 261-residue stretch at Tyr55–Phe315 folds into the Protein kinase domain. Residues Ser65–Ser67 and Lys84 each bind ATP. The tract at residues Leu86–Tyr131 is PIF-pocket. Residues Glu134–Ala136 and Glu140 contribute to the ATP site. The active-site Proton acceptor is the Asp179. Residues Glu183 and Asp197 each contribute to the ATP site. Ser220 carries the post-translational modification Phosphoserine; by autocatalysis. Ser538 bears the Phosphoserine mark.

It belongs to the protein kinase superfamily. AGC Ser/Thr protein kinase family. PDPK1 subfamily.

Its subcellular location is the cytoplasm. The protein localises to the nucleus. The protein resides in the cytoskeleton. It is found in the microtubule organizing center. It localises to the spindle pole body. It carries out the reaction L-seryl-[protein] + ATP = O-phospho-L-seryl-[protein] + ADP + H(+). The catalysed reaction is L-threonyl-[protein] + ATP = O-phospho-L-threonyl-[protein] + ADP + H(+). In Schizosaccharomyces pombe (strain 972 / ATCC 24843) (Fission yeast), this protein is Serine/threonine-protein kinase ppk21 (ppk21).